We begin with the raw amino-acid sequence, 230 residues long: Cytidylate kinase (230 aa).

12-20 (GPSGAGKGT) lines the ATP pocket.

The protein belongs to the cytidylate kinase family. Type 1 subfamily.

It localises to the cytoplasm. It carries out the reaction CMP + ATP = CDP + ADP. The enzyme catalyses dCMP + ATP = dCDP + ADP. This Shewanella sediminis (strain HAW-EB3) protein is Cytidylate kinase.